The following is a 643-amino-acid chain: Inner kinetochore subunit cnp3 (643 aa).

Disordered regions lie at residues Ser55–Asp209 and Ser224–Ser386. Low complexity-rich tracts occupy residues Ala85–Asp97 and Asp104–Gly125. The segment covering Asp166–Thr185 has biased composition (basic and acidic residues). 3 stretches are compositionally biased toward polar residues: residues Tyr235–Gln261, Leu295–Gln304, and Lys313–Ser322. 2 stretches are compositionally biased toward basic residues: residues Val332–Lys341 and Gly360–Lys370. A DNA-binding region (a.T hook) is located at residues Lys333–Glu345.

It belongs to the CENP-C/MIF2 family. As to quaternary structure, component of the inner kinetochore constitutive centromere-associated network (CCAN) (also known as central kinetochore Sim4 complex in fission yeast), which is composed of at least cnl2, cnp3, cnp20, fta1, fta2, fta3, fta4, fta6, fta7, mal2, mhf1, mhf2, mis6, mis15, mis17, sim4 and wip1.

The protein localises to the nucleus. It is found in the nucleoplasm. In terms of biological role, component of the kinetochore, a multiprotein complex that assembles on centromeric DNA and attaches chromosomes to spindle microtubules, mediating chromosome segregation and sister chromatid segregation during meiosis and mitosis. Component of the inner kinetochore constitutive centromere-associated network (CCAN), which serves as a structural platform for outer kinetochore assembly. This chain is Inner kinetochore subunit cnp3 (cnp3), found in Schizosaccharomyces pombe (strain 972 / ATCC 24843) (Fission yeast).